Here is a 255-residue protein sequence, read N- to C-terminus: Ribosomal RNA small subunit methyltransferase A (255 aa).

Asn11, Leu13, Gly38, Glu59, Asp83, and Asn101 together coordinate S-adenosyl-L-methionine.

This sequence belongs to the class I-like SAM-binding methyltransferase superfamily. rRNA adenine N(6)-methyltransferase family. RsmA subfamily.

Its subcellular location is the cytoplasm. The catalysed reaction is adenosine(1518)/adenosine(1519) in 16S rRNA + 4 S-adenosyl-L-methionine = N(6)-dimethyladenosine(1518)/N(6)-dimethyladenosine(1519) in 16S rRNA + 4 S-adenosyl-L-homocysteine + 4 H(+). In terms of biological role, specifically dimethylates two adjacent adenosines (A1518 and A1519) in the loop of a conserved hairpin near the 3'-end of 16S rRNA in the 30S particle. May play a critical role in biogenesis of 30S subunits. This is Ribosomal RNA small subunit methyltransferase A from Thiobacillus denitrificans (strain ATCC 25259 / T1).